A 200-amino-acid chain; its full sequence is Transcription elongation factor A protein-like 5 (200 aa).

Basic and acidic residues-rich tracts occupy residues 1-49 (MEKF…KLEV), 61-85 (GEGK…KPDS), 94-106 (RAAE…DYVP), 114-153 (DRGT…EELR), and 190-200 (GQKDLEDAPFV). Residues 1–200 (MEKFYKENEG…QKDLEDAPFV (200 aa)) are disordered.

Belongs to the TFS-II family. TFA subfamily.

It is found in the nucleus. Its function is as follows. May be involved in transcriptional regulation. In Mus musculus (Mouse), this protein is Transcription elongation factor A protein-like 5 (Tceal5).